The sequence spans 395 residues: Gastric triacylglycerol lipase (395 aa).

The N-terminal stretch at 1-18 (MWLLLITSVISTFGGAHG) is a signal peptide. N-linked (GlcNAc...) asparagine glycans are attached at residues Asn33, Asn68, and Asn98. The 300-residue stretch at 77-376 (PVVYLQHGLI…LAYNHLDFIW (300 aa)) folds into the AB hydrolase-1 domain. Residue Ser171 is the Nucleophile of the active site. A disulfide bridge connects residues Cys245 and Cys254. N-linked (GlcNAc...) asparagine glycosylation is present at Asn270. Residues Asp342 and His371 each act as charge relay system in the active site.

This sequence belongs to the AB hydrolase superfamily. Lipase family. As to expression, secreted by the serous (von Ebner's) glands at the back of the rat tongue.

Its subcellular location is the secreted. The enzyme catalyses a triacylglycerol + H2O = a diacylglycerol + a fatty acid + H(+). It catalyses the reaction 1,2,3-tri-(9Z-octadecenoyl)-glycerol + H2O = 1,2-di-(9Z-octadecenoyl)-sn-glycerol + (9Z)-octadecenoate + H(+). The catalysed reaction is 1,2,3-trioctanoylglycerol + H2O = 1,2-dioctanoyl-sn-glycerol + octanoate + H(+). In terms of biological role, catalyzes the hydrolysis of triacylglycerols to yield free fatty acids, diacylglycerol, monoacylglycerol, and glycerol. Shows a preferential hydrolysis at the sn-3 position of triacylglycerol. The sequence is that of Gastric triacylglycerol lipase (Lipf) from Rattus norvegicus (Rat).